We begin with the raw amino-acid sequence, 1755 residues long: Transposon Ty1-DR6 Gag-Pol polyprotein (1755 aa).

3 stretches are compositionally biased toward polar residues: residues 1 to 23 (MESQQLSQHSPISHGSACASVTS), 48 to 60 (TKANSQQTTTPAS), and 127 to 152 (QSQFPQYPSSVGTPLSTPSPESGNTF). Disordered regions lie at residues 1 to 93 (MESQ…MMTQ), 126 to 174 (PQSQ…PPPM), and 352 to 421 (GSRN…SKST). The segment covering 153–165 (TDSSSADSDMTST) has biased composition (low complexity). Residues 299–401 (NNGIHINNKV…NSKSKTARAH (103 aa)) are RNA-binding. A compositionally biased stretch (low complexity) spans 402-418 (NVSTSNNSPSTDNDSIS). A Phosphoserine modification is found at serine 416. The For protease activity; shared with dimeric partner role is filled by aspartate 461. The integrase-type zinc finger-like stretch occupies residues 583-640 (NVHTSESTRKYPYPFIHRMLAHANAQTIRYSLKNNTITYFNESDVDWSSAIDYQCPDC). Positions 660–835 (NSYEPFQYLH…AGLDISTLLP (176 aa)) constitute an Integrase catalytic domain. 2 residues coordinate Mg(2+): aspartate 671 and aspartate 736. Disordered regions lie at residues 956 to 1087 (SKAV…ETEK), 1092 to 1111 (RSPSIDASPPENNSSHNIVP), and 1130 to 1187 (DLPL…DNET). Low complexity predominate over residues 960 to 969 (SPTDSTPPST). Residues 1005-1015 (STPQISNIEST) show a composition bias toward polar residues. Positions 1038–1053 (ESSHASKSKDFRHSDS) are enriched in basic and acidic residues. Composition is skewed to polar residues over residues 1054–1082 (YSENETNHTNVPISSTGGTNNKTVPQISD) and 1101–1111 (PENNSSHNIVP). The Bipartite nuclear localization signal signature appears at 1178–1212 (KKRSLEDNETEIKVSRDTWNTKNMRSLEPPRSKKR). The 139-residue stretch at 1338 to 1476 (NNYYITQLDI…DILGLEIKYQ (139 aa)) folds into the Reverse transcriptase Ty1/copia-type domain. The Mg(2+) site is built by aspartate 1346, aspartate 1427, aspartate 1428, aspartate 1610, glutamate 1652, and aspartate 1685. The region spanning 1610-1752 (DASYGNQPYY…IKTFKLLTNK (143 aa)) is the RNase H Ty1/copia-type domain.

As to quaternary structure, the capsid protein forms a homotrimer, from which the VLPs are assembled. The protease is a homodimer, whose active site consists of two apposed aspartic acid residues. Post-translationally, initially, virus-like particles (VLPs) are composed of the structural unprocessed proteins Gag and Gag-Pol, and also contain the host initiator methionine tRNA (tRNA(i)-Met) which serves as a primer for minus-strand DNA synthesis, and a dimer of genomic Ty RNA. Processing of the polyproteins occurs within the particle and proceeds by an ordered pathway, called maturation. First, the protease (PR) is released by autocatalytic cleavage of the Gag-Pol polyprotein yielding capsid protein p45 and a Pol-p154 precursor protein. This cleavage is a prerequisite for subsequent processing of Pol-p154 at the remaining sites to release the mature structural and catalytic proteins. Maturation takes place prior to the RT reaction and is required to produce transposition-competent VLPs.

The protein resides in the cytoplasm. Its subcellular location is the nucleus. It carries out the reaction DNA(n) + a 2'-deoxyribonucleoside 5'-triphosphate = DNA(n+1) + diphosphate. The catalysed reaction is Endonucleolytic cleavage to 5'-phosphomonoester.. Its function is as follows. Capsid protein (CA) is the structural component of the virus-like particle (VLP), forming the shell that encapsulates the retrotransposons dimeric RNA genome. The particles are assembled from trimer-clustered units and there are holes in the capsid shells that allow for the diffusion of macromolecules. CA also has nucleocapsid-like chaperone activity, promoting primer tRNA(i)-Met annealing to the multipartite primer-binding site (PBS), dimerization of Ty1 RNA and initiation of reverse transcription. The aspartyl protease (PR) mediates the proteolytic cleavages of the Gag and Gag-Pol polyproteins after assembly of the VLP. In terms of biological role, reverse transcriptase/ribonuclease H (RT) is a multifunctional enzyme that catalyzes the conversion of the retro-elements RNA genome into dsDNA within the VLP. The enzyme displays a DNA polymerase activity that can copy either DNA or RNA templates, and a ribonuclease H (RNase H) activity that cleaves the RNA strand of RNA-DNA heteroduplexes during plus-strand synthesis and hydrolyzes RNA primers. The conversion leads to a linear dsDNA copy of the retrotransposon that includes long terminal repeats (LTRs) at both ends. Functionally, integrase (IN) targets the VLP to the nucleus, where a subparticle preintegration complex (PIC) containing at least integrase and the newly synthesized dsDNA copy of the retrotransposon must transit the nuclear membrane. Once in the nucleus, integrase performs the integration of the dsDNA into the host genome. The chain is Transposon Ty1-DR6 Gag-Pol polyprotein (TY1B-DR6) from Saccharomyces cerevisiae (strain ATCC 204508 / S288c) (Baker's yeast).